Reading from the N-terminus, the 186-residue chain is UPF0200 protein PH1008 (186 aa).

7–14 (GMPGSGKG) lines the ATP pocket.

The protein belongs to the UPF0200 family.

This is UPF0200 protein PH1008 from Pyrococcus horikoshii (strain ATCC 700860 / DSM 12428 / JCM 9974 / NBRC 100139 / OT-3).